We begin with the raw amino-acid sequence, 291 residues long: Trimeric intracellular cation channel type B (291 aa).

Over 1 to 16 the chain is Lumenal; sequence MEYPWDDLTLAFSRTS. Residues 17–33 form a helical membrane-spanning segment; it reads MFPFFDIAHYLVSVMAL. The Cytoplasmic segment spans residues 34–47; it reads KQRPGAVAAAWSNP. A helical membrane pass occupies residues 48–69; that stretch reads LSSWLSAMLHCFGGGILSCILL. At 70–80 the chain is on the lumenal side; that stretch reads AEPPLKFLTNH. The helical transmembrane segment at 81–99 threads the bilayer; it reads TNILLASSIWYIVFFCPRD. The Cytoplasmic segment spans residues 100–103; sequence LVSQ. The chain crosses the membrane as a helical span at residues 104 to 122; the sequence is GYSYQPIQLLAAGMKEVTR. Lys-118 and Arg-122 together coordinate a 1,2-diacyl-sn-glycero-3-phospho-(1D-myo-inositol-4,5-bisphosphate). At 123–138 the chain is on the lumenal side; the sequence is TWKIVGGVAHANGYYR. A helical membrane pass occupies residues 139-156; that stretch reads NGWIVMIAVGWARGAGGA. Residues 157-179 lie on the Cytoplasmic side of the membrane; it reads IITACEQLLKGDWKPEGDEWLKM. The helical transmembrane segment at 180–197 threads the bilayer; sequence SFPCKVTLLGSIMFTFQH. The Lumenal segment spans residues 198–206; it reads TRHLAISKH. A helical transmembrane segment spans residues 207-225; that stretch reads DLMFLYTIFLVTIKVTMMM. Residues 226-291 are Cytoplasmic-facing; the sequence is TKDAAVTLTP…SAKRHAKKED (66 aa). Positions 254-291 are disordered; sequence LSEKKAEVKPSSNGSASSASKRGTEPPSSAKRHAKKED. Positions 264–273 are enriched in low complexity; the sequence is SSNGSASSAS.

This sequence belongs to the TMEM38 family. Homotrimer; conformation seems to be controled by binding to diacylglycerol (DAG).

It localises to the endoplasmic reticulum membrane. It catalyses the reaction K(+)(in) = K(+)(out). With respect to regulation, channel activity is activated by increased cytosolic Ca(2+) levels and blocked by luminal high Ca(2+) levels. Intracellular monovalent cation channel required for maintenance of rapid intracellular calcium release. Acts as a potassium counter-ion channel that functions in synchronization with calcium release from intracellular stores. Activated by increased cytosolic Ca(2+) levels. The protein is Trimeric intracellular cation channel type B (Tmem38b) of Rattus norvegicus (Rat).